Reading from the N-terminus, the 107-residue chain is UPF0060 membrane protein PSHAa1175 (107 aa).

4 helical membrane-spanning segments follow: residues 3 to 23 (IFGLFLITALAEIIGCYLPYL), 30 to 50 (SVWLLVPAALSLAIFAWLLSL), 60 to 80 (AAYGGVYIFMAILWLWAVDGI), and 84 to 104 (TWDLVGSGVALVGMAIIMFAP).

It belongs to the UPF0060 family.

Its subcellular location is the cell inner membrane. This is UPF0060 membrane protein PSHAa1175 from Pseudoalteromonas translucida (strain TAC 125).